Consider the following 772-residue polypeptide: Carnitine O-palmitoyltransferase 1, muscle isoform (772 aa).

Residues 1–47 lie on the Cytoplasmic side of the membrane; it reads MAEAHQAVAFQFTVTPDGVDFRLSREALRHIYLSGINSWKKRLIRIK. A helical transmembrane segment spans residues 48–73; it reads NGILRGVYPGSPTSWLVVVMATVGSN. At 74-102 the chain is on the mitochondrial intermembrane side; it reads YCKVDISMGLVHCIQRCLPTRYGSYGTPQ. The chain crosses the membrane as a helical span at residues 103-122; that stretch reads TETLLSMVIFSTGVWATGIF. The Cytoplasmic segment spans residues 123-772; it reads LFRQTLKLLL…DLFKISKTDS (650 aa). Residue histidine 473 is the Proton acceptor of the active site. Residue 555 to 567 coordinates CoA; sequence GKGLIKKCRTSPD. (R)-carnitine-binding residues include tyrosine 589 and threonine 602.

This sequence belongs to the carnitine/choline acetyltransferase family. In terms of tissue distribution, high expression in heart, skeletal muscle and brown adipose tissue. Also expressed in white adipose tissue, but not in liver.

The protein localises to the mitochondrion outer membrane. The enzyme catalyses (R)-carnitine + hexadecanoyl-CoA = O-hexadecanoyl-(R)-carnitine + CoA. Its pathway is lipid metabolism; fatty acid beta-oxidation. Functionally, catalyzes the transfer of the acyl group of long-chain fatty acid-CoA conjugates onto carnitine, an essential step for the mitochondrial uptake of long-chain fatty acids and their subsequent beta-oxidation in the mitochondrion. The sequence is that of Carnitine O-palmitoyltransferase 1, muscle isoform (Cpt1b) from Rattus norvegicus (Rat).